We begin with the raw amino-acid sequence, 118 residues long: MPNSIESRLRRARQTRAKIAELKVVRLAIHRSNSHIYAQLIDGSGSKVLASASTLEPELRKELPNGGTVTAAAVVGKRVAEKARGLGIETVAFDRSGFKYHGRVKALADAARENGLKF.

This sequence belongs to the universal ribosomal protein uL18 family. In terms of assembly, part of the 50S ribosomal subunit; part of the 5S rRNA/L5/L18/L25 subcomplex. Contacts the 5S and 23S rRNAs.

Functionally, this is one of the proteins that bind and probably mediate the attachment of the 5S RNA into the large ribosomal subunit, where it forms part of the central protuberance. This is Large ribosomal subunit protein uL18 from Nitrosospira multiformis (strain ATCC 25196 / NCIMB 11849 / C 71).